The following is a 702-amino-acid chain: Pseudouridylate synthase PUS7L (702 aa).

S79 carries the phosphoserine modification. Residues 84-116 (NSEGAADLPGCSDGDRSHQSDSEKENSVNSVTS) form a disordered region. The span at 96–109 (DGDRSHQSDSEKEN) shows a compositional bias: basic and acidic residues. D339 functions as the Nucleophile in the catalytic mechanism. Residues 424 to 646 (GFVNYYGPQR…PGCYRHIVKH (223 aa)) enclose the TRUD domain.

This sequence belongs to the pseudouridine synthase TruD family.

The catalysed reaction is a uridine in mRNA = a pseudouridine in mRNA. Functionally, pseudouridine synthase that catalyzes pseudouridylation of mRNAs. This is Pseudouridylate synthase PUS7L from Mus musculus (Mouse).